We begin with the raw amino-acid sequence, 140 residues long: MSIMQVEVVSSEQKIYSGEATFIVVPTVQGELGIYPRHEPIMSLVRLGALRLTVLGEDKEVLVAVSGGVLEVQPDKVTVLADVAVRSAEMDQARAEEAKKAAEAGISQAKDDKALAEAHKALAAAIAQLKTLDYIRSHKK.

The protein belongs to the ATPase epsilon chain family. As to quaternary structure, F-type ATPases have 2 components, CF(1) - the catalytic core - and CF(0) - the membrane proton channel. CF(1) has five subunits: alpha(3), beta(3), gamma(1), delta(1), epsilon(1). CF(0) has three main subunits: a, b and c.

The protein localises to the cell inner membrane. In terms of biological role, produces ATP from ADP in the presence of a proton gradient across the membrane. The chain is ATP synthase epsilon chain from Neisseria meningitidis serogroup A / serotype 4A (strain DSM 15465 / Z2491).